Consider the following 89-residue polypeptide: Phosphocarrier protein HPr (89 aa).

Residues 1 to 89 (MERTVTVVPE…DILSTPEAKQ (89 aa)) form the HPr domain. His-14 acts as the Pros-phosphohistidine intermediate in catalysis. Ser-47 carries the phosphoserine; by HPrK/P modification.

It belongs to the HPr family.

The protein resides in the cytoplasm. Phosphorylation on Ser-47 inhibits the phosphoryl transfer from enzyme I to HPr. General (non sugar-specific) component of the phosphoenolpyruvate-dependent sugar phosphotransferase system (sugar PTS). This major carbohydrate active-transport system catalyzes the phosphorylation of incoming sugar substrates concomitantly with their translocation across the cell membrane. The phosphoryl group from phosphoenolpyruvate (PEP) is transferred to the phosphoryl carrier protein HPr by enzyme I. Phospho-HPr then transfers it to the PTS EIIA domain. Is involved in fructose transport. This Haloferax volcanii (strain ATCC 29605 / DSM 3757 / JCM 8879 / NBRC 14742 / NCIMB 2012 / VKM B-1768 / DS2) (Halobacterium volcanii) protein is Phosphocarrier protein HPr (ptsH1).